The following is a 131-amino-acid chain: Holo-[acyl-carrier-protein] synthase (131 aa).

Asp-8 and Glu-59 together coordinate Mg(2+).

The protein belongs to the P-Pant transferase superfamily. AcpS family. It depends on Mg(2+) as a cofactor.

The protein localises to the cytoplasm. It carries out the reaction apo-[ACP] + CoA = holo-[ACP] + adenosine 3',5'-bisphosphate + H(+). Transfers the 4'-phosphopantetheine moiety from coenzyme A to a Ser of acyl-carrier-protein. In Rickettsia conorii (strain ATCC VR-613 / Malish 7), this protein is Holo-[acyl-carrier-protein] synthase.